Consider the following 429-residue polypeptide: GTPase Obg (429 aa).

One can recognise an Obg domain in the interval 1-158; the sequence is MFVDQVKIYV…RNVQLELKVL (158 aa). The interval 124-145 is disordered; sequence RGNKRFATPANPAPELSENGEP. An OBG-type G domain is found at 159-329; it reads ADVGLVGFPS…LLLAIADKLE (171 aa). GTP is bound by residues 165–172, 190–194, 212–215, 282–285, and 310–312; these read GFPSVGKS, FTTIV, DLPG, NKMD, and SAV. The Mg(2+) site is built by Ser-172 and Thr-192. Residues 351–429 form the OCT domain; it reads KYVAEEPDFE…LLDYEFEFMD (79 aa).

It belongs to the TRAFAC class OBG-HflX-like GTPase superfamily. OBG GTPase family. As to quaternary structure, monomer. Mg(2+) serves as cofactor.

It is found in the cytoplasm. Its function is as follows. An essential GTPase which binds GTP, GDP and possibly (p)ppGpp with moderate affinity, with high nucleotide exchange rates and a fairly low GTP hydrolysis rate. Plays a role in control of the cell cycle, stress response, ribosome biogenesis and in those bacteria that undergo differentiation, in morphogenesis control. This chain is GTPase Obg, found in Listeria innocua serovar 6a (strain ATCC BAA-680 / CLIP 11262).